The following is a 482-amino-acid chain: Argininosuccinate synthase (482 aa).

Residues 17–25 and A43 each bind ATP; that span reads AFSGGLDTS. Residue Y99 participates in L-citrulline binding. Residues G129 and T131 each coordinate ATP. T131, N135, and D136 together coordinate L-aspartate. N135 contacts L-citrulline. D136 contributes to the ATP binding site. L-citrulline contacts are provided by R139 and S192. Residue D194 participates in ATP binding. T201, E203, and E280 together coordinate L-citrulline. Residues 461–482 form a disordered region; the sequence is SRGEATDEETMLDRAAMESGTD.

Belongs to the argininosuccinate synthase family. Type 2 subfamily. As to quaternary structure, homotetramer.

The protein resides in the cytoplasm. The catalysed reaction is L-citrulline + L-aspartate + ATP = 2-(N(omega)-L-arginino)succinate + AMP + diphosphate + H(+). The protein operates within amino-acid biosynthesis; L-arginine biosynthesis; L-arginine from L-ornithine and carbamoyl phosphate: step 2/3. This is Argininosuccinate synthase (argG) from Streptomyces lavendulae.